The sequence spans 537 residues: CTP synthase (537 aa).

Residues M1 to I265 are amidoligase domain. S13 contacts CTP. S13 serves as a coordination point for UTP. Residues S14–L19 and D71 contribute to the ATP site. Positions 71 and 139 each coordinate Mg(2+). Residues D146–E148 and K222 contribute to the CTP site. K222 is a binding site for UTP. The Glutamine amidotransferase type-1 domain occupies R290–C536. G352 is an L-glutamine binding site. C379 serves as the catalytic Nucleophile; for glutamine hydrolysis. L-glutamine contacts are provided by residues F380 to Q383, E403, and R464. Active-site residues include H509 and E511.

This sequence belongs to the CTP synthase family. Homotetramer.

It catalyses the reaction UTP + L-glutamine + ATP + H2O = CTP + L-glutamate + ADP + phosphate + 2 H(+). It carries out the reaction L-glutamine + H2O = L-glutamate + NH4(+). The enzyme catalyses UTP + NH4(+) + ATP = CTP + ADP + phosphate + 2 H(+). It participates in pyrimidine metabolism; CTP biosynthesis via de novo pathway; CTP from UDP: step 2/2. Its activity is regulated as follows. Allosterically activated by GTP, when glutamine is the substrate; GTP has no effect on the reaction when ammonia is the substrate. The allosteric effector GTP functions by stabilizing the protein conformation that binds the tetrahedral intermediate(s) formed during glutamine hydrolysis. Inhibited by the product CTP, via allosteric rather than competitive inhibition. Catalyzes the ATP-dependent amination of UTP to CTP with either L-glutamine or ammonia as the source of nitrogen. Regulates intracellular CTP levels through interactions with the four ribonucleotide triphosphates. The protein is CTP synthase of Rickettsia conorii (strain ATCC VR-613 / Malish 7).